Reading from the N-terminus, the 649-residue chain is Phosphomethylpyrimidine synthase (649 aa).

Residues Asn235, Met264, Tyr293, His329, 349–351, 390–393, and Glu429 each bind substrate; these read SRG and DGLR. His433 is a Zn(2+) binding site. Tyr456 serves as a coordination point for substrate. Residue His497 coordinates Zn(2+). Cys577, Cys580, and Cys585 together coordinate [4Fe-4S] cluster. The disordered stretch occupies residues 620–649; it reads GMRQKSQEFRDTGSELYHPAVGAKEAQLEE. A compositionally biased stretch (basic and acidic residues) spans 621 to 632; it reads MRQKSQEFRDTG.

This sequence belongs to the ThiC family. As to quaternary structure, homodimer. It depends on [4Fe-4S] cluster as a cofactor.

The catalysed reaction is 5-amino-1-(5-phospho-beta-D-ribosyl)imidazole + S-adenosyl-L-methionine = 4-amino-2-methyl-5-(phosphooxymethyl)pyrimidine + CO + 5'-deoxyadenosine + formate + L-methionine + 3 H(+). It participates in cofactor biosynthesis; thiamine diphosphate biosynthesis. In terms of biological role, catalyzes the synthesis of the hydroxymethylpyrimidine phosphate (HMP-P) moiety of thiamine from aminoimidazole ribotide (AIR) in a radical S-adenosyl-L-methionine (SAM)-dependent reaction. This Vibrio atlanticus (strain LGP32) (Vibrio splendidus (strain Mel32)) protein is Phosphomethylpyrimidine synthase.